A 457-amino-acid polypeptide reads, in one-letter code: UDP-glycosyltransferase 708C1 (457 aa).

Gly31 is a binding site for UDP-alpha-D-glucose. His32 serves as the catalytic Proton acceptor. His32 is an an anthocyanidin binding site. Thr34 contributes to the UDP-alpha-D-glucose binding site. Asn94 serves as a coordination point for an anthocyanidin. Asp129 functions as the Charge relay in the catalytic mechanism. Thr150 contributes to the UDP-alpha-D-glucose binding site. The tract at residues 279-280 (NR) is UDP. 7 residues coordinate UDP-alpha-D-glucose: Val341, Gln343, His358, Trp361, Asn362, Ser363, and Glu366. Gly381 serves as a coordination point for an anthocyanidin. 2 residues coordinate UDP-alpha-D-glucose: Asp382 and Gln383.

This sequence belongs to the UDP-glycosyltransferase family. Expressed in cotyledons. Not detected in flowers, leaves, roots and hypocotyls.

The enzyme catalyses a 3'-hydro-2'-hydroxy-beta-oxodihydrochalcone + UDP-alpha-D-glucose = a 3'-(beta-D-glucopyranosyl)-2'-hydroxy-beta-oxodihydrochalcone + UDP + H(+). In terms of biological role, UDP-glucose-dependent glucosyltransferase catalyzing the C-glucosylation of 2-hydroxyflavanones (2-hydroxynaringenin, 2-hydroxyeriodictyol and 2-hydroxypinocembrin) and phloretin. No activity with flavanones, flavones or flavonols. Exhibits C-glycosylation activity toward 2',4',6'-trihydroxyacetophenone and phloretin using UDP-glucose as sugar donor. Can use UDP-galactose as sugar donor, but catalytic efficiency is 14-fold lower toward UDP-galactose than toward UDP-glucose. This is UDP-glycosyltransferase 708C1 from Fagopyrum esculentum (Common buckwheat).